Consider the following 157-residue polypeptide: Ribosomal RNA large subunit methyltransferase H (157 aa).

S-adenosyl-L-methionine-binding positions include Leu73, Gly105, and 124-129 (LSKMTF).

It belongs to the RNA methyltransferase RlmH family. As to quaternary structure, homodimer.

It is found in the cytoplasm. It catalyses the reaction pseudouridine(1915) in 23S rRNA + S-adenosyl-L-methionine = N(3)-methylpseudouridine(1915) in 23S rRNA + S-adenosyl-L-homocysteine + H(+). Its function is as follows. Specifically methylates the pseudouridine at position 1915 (m3Psi1915) in 23S rRNA. The sequence is that of Ribosomal RNA large subunit methyltransferase H from Phocaeicola vulgatus (strain ATCC 8482 / DSM 1447 / JCM 5826 / CCUG 4940 / NBRC 14291 / NCTC 11154) (Bacteroides vulgatus).